We begin with the raw amino-acid sequence, 262 residues long: Putative ankyrin repeat protein R848 (262 aa).

ANK repeat units lie at residues 8–37 (SNDY…NVTH), 38–67 (DNNY…DIRD), 68–97 (CRDY…NIRA), 99–127 (DDYA…NFRA), 128–157 (DNDY…DIRA), 159–187 (DDYA…DFRS), and 189–217 (NNAS…DVNT).

The polypeptide is Putative ankyrin repeat protein R848 (Acanthamoeba polyphaga (Amoeba)).